An 862-amino-acid polypeptide reads, in one-letter code: Rab GTPase-binding effector protein 1 (862 aa).

The residue at position 2 (Ala2) is an N-acetylalanine. Positions 11-345 (DVSLQQRVAE…KKADVEEEIK (335 aa)) form a coiled coil. Position 282 is an N6-acetyllysine (Lys282). A disordered region spans residues 315–338 (ELKKKDQEDDEQQRLNKRKDHKKA). A phosphoserine mark is found at Ser374, Ser377, and Ser407. Thr408 is modified (phosphothreonine). Ser410 is subject to Phosphoserine. An interaction with AP1G1, AP1G2, GGA1, GGA2 and GGA3 region spans residues 435–447 (DESDFGPLVGADS). Residues 534–816 (DMCSNYEKQL…LQTELDVSEQ (283 aa)) are a coiled coil.

It belongs to the rabaptin family. Homodimer when bound to RAB5A. Heterodimer with RABGEF1. The heterodimer binds RAB4A and RAB5A that have been activated by GTP-binding. Interacts with TSC2. Interacts with GGA1 (via GAE domain), GGA2 (via GAE domain) and GGA3 (via GAE domain). Interacts with AP1G1 (via GAE domain). Interacts with AP1G2 (via GAE domain). Interacts with ECPAS. Interacts with KCNH1. Interacts with PKD1 (via C-terminal domain) and GGA1; the interactions recruit PKD1:PKD2 complex to GGA1 and ARL3 at trans-Golgi network. Proteolytic cleavage by caspases in apoptotic cells causes loss of endosome fusion activity.

It is found in the cytoplasm. The protein localises to the early endosome. Its subcellular location is the recycling endosome. It localises to the cytoplasmic vesicle. Its function is as follows. Rab effector protein acting as linker between gamma-adaptin, RAB4A and RAB5A. Involved in endocytic membrane fusion and membrane trafficking of recycling endosomes. Involved in KCNH1 channels trafficking to and from the cell membrane. Stimulates RABGEF1 mediated nucleotide exchange on RAB5A. Mediates the traffic of PKD1:PKD2 complex from the endoplasmic reticulum through the Golgi to the cilium. The protein is Rab GTPase-binding effector protein 1 (RABEP1) of Homo sapiens (Human).